The following is a 294-amino-acid chain: Cytidine deaminase (294 aa).

CMP/dCMP-type deaminase domains follow at residues 48–168 (DEDA…FGPK) and 186–294 (LTGD…VLLG). 89-91 (NME) contributes to the substrate binding site. Position 102 (His102) interacts with Zn(2+). Catalysis depends on Glu104, which acts as the Proton donor. The Zn(2+) site is built by Cys129 and Cys132.

The protein belongs to the cytidine and deoxycytidylate deaminase family. Homodimer. Zn(2+) serves as cofactor.

It carries out the reaction cytidine + H2O + H(+) = uridine + NH4(+). The catalysed reaction is 2'-deoxycytidine + H2O + H(+) = 2'-deoxyuridine + NH4(+). Its function is as follows. This enzyme scavenges exogenous and endogenous cytidine and 2'-deoxycytidine for UMP synthesis. The protein is Cytidine deaminase of Salmonella schwarzengrund (strain CVM19633).